Here is a 292-residue protein sequence, read N- to C-terminus: 2-(5''-triphosphoribosyl)-3'-dephosphocoenzyme-A synthase (292 aa).

The protein belongs to the CitG/MdcB family.

The catalysed reaction is 3'-dephospho-CoA + ATP = 2'-(5''-triphospho-alpha-D-ribosyl)-3'-dephospho-CoA + adenine. Functionally, catalyzes the formation of 2-(5''-triphosphoribosyl)-3'-dephosphocoenzyme-A, the precursor of the prosthetic group of the holo-acyl carrier protein (gamma chain) of citrate lyase, from ATP and dephospho-CoA. In Escherichia coli (strain UTI89 / UPEC), this protein is 2-(5''-triphosphoribosyl)-3'-dephosphocoenzyme-A synthase.